We begin with the raw amino-acid sequence, 105 residues long: Urease subunit beta (105 aa).

The protein belongs to the urease beta subunit family. Heterotrimer of UreA (gamma), UreB (beta) and UreC (alpha) subunits. Three heterotrimers associate to form the active enzyme.

Its subcellular location is the cytoplasm. The enzyme catalyses urea + 2 H2O + H(+) = hydrogencarbonate + 2 NH4(+). Its pathway is nitrogen metabolism; urea degradation; CO(2) and NH(3) from urea (urease route): step 1/1. In Pseudomonas entomophila (strain L48), this protein is Urease subunit beta.